Consider the following 222-residue polypeptide: Large ribosomal subunit protein uL1 (222 aa).

Belongs to the universal ribosomal protein uL1 family. In terms of assembly, part of the 50S ribosomal subunit.

Functionally, binds directly to 23S rRNA. Probably involved in E site tRNA release. In terms of biological role, protein L1 is also a translational repressor protein, it controls the translation of its operon by binding to its mRNA. In Pyrobaculum arsenaticum (strain DSM 13514 / JCM 11321 / PZ6), this protein is Large ribosomal subunit protein uL1.